Consider the following 506-residue polypeptide: MEEFKINLERDRSQQHDFIYPLIFQEYIYAFAHDRGLKRSIFLENAGYDNKSSLLIVKRLITHLITQIYQQNHFLFSVNDSKQNKIFGYNTHFYSQRIFEGFAIVVEIPFYLRLVSFLEDKERVKSQNLGSIHSIFPFLEDQFSHLNYVLDILIPHPIHLEILVQTLRYWVKDASSLHLLRFFLYDYPILNSLIIPKKSSFSISKINQRFFLFLYNFHVWEYESIFVFLRTQSSHLRLISSETFLERISFYQKIELEVFTNEFKAILWDFKEPFMHYVRYRGKAILASKGTSLLMNKWKYYLVNFWQCYFYMWSQPKRICINQLSNHSLDFMSYLSSVRLQLLMVRSKMIENSFLIENASKKFDTLMPITPMIGYLSKAKFCNVLGHPVSKPVWADLSDSDIIDRFGRIYRNISHYHSGSLKKTSLYRIKYILRLSCARTLARKHKSTVRAFLKRLGVGLLEEFFTEEEQVFYLTFPKVSSTSGKLYRRKIWYLDIICINDLANYE.

Belongs to the intron maturase 2 family. MatK subfamily.

The protein localises to the plastid. It localises to the chloroplast. Functionally, usually encoded in the trnK tRNA gene intron. Probably assists in splicing its own and other chloroplast group II introns. The polypeptide is Maturase K (Calluna vulgaris (Heather)).